A 155-amino-acid polypeptide reads, in one-letter code: SsrA-binding protein (155 aa).

Belongs to the SmpB family.

The protein localises to the cytoplasm. Functionally, required for rescue of stalled ribosomes mediated by trans-translation. Binds to transfer-messenger RNA (tmRNA), required for stable association of tmRNA with ribosomes. tmRNA and SmpB together mimic tRNA shape, replacing the anticodon stem-loop with SmpB. tmRNA is encoded by the ssrA gene; the 2 termini fold to resemble tRNA(Ala) and it encodes a 'tag peptide', a short internal open reading frame. During trans-translation Ala-aminoacylated tmRNA acts like a tRNA, entering the A-site of stalled ribosomes, displacing the stalled mRNA. The ribosome then switches to translate the ORF on the tmRNA; the nascent peptide is terminated with the 'tag peptide' encoded by the tmRNA and targeted for degradation. The ribosome is freed to recommence translation, which seems to be the essential function of trans-translation. The protein is SsrA-binding protein of Streptococcus pyogenes serotype M4 (strain MGAS10750).